A 381-amino-acid polypeptide reads, in one-letter code: 1-deoxy-D-xylulose 5-phosphate reductoisomerase (381 aa).

Positions 10, 11, 12, 13, 36, 37, 38, and 122 each coordinate NADPH. K123 is a binding site for 1-deoxy-D-xylulose 5-phosphate. E124 provides a ligand contact to NADPH. D148 is a Mn(2+) binding site. 1-deoxy-D-xylulose 5-phosphate contacts are provided by S149, E150, S173, and H196. E150 contacts Mn(2+). G202 is a binding site for NADPH. 4 residues coordinate 1-deoxy-D-xylulose 5-phosphate: S209, N214, K215, and E218. E218 lines the Mn(2+) pocket.

Belongs to the DXR family. The cofactor is Mg(2+). Requires Mn(2+) as cofactor.

The enzyme catalyses 2-C-methyl-D-erythritol 4-phosphate + NADP(+) = 1-deoxy-D-xylulose 5-phosphate + NADPH + H(+). It functions in the pathway isoprenoid biosynthesis; isopentenyl diphosphate biosynthesis via DXP pathway; isopentenyl diphosphate from 1-deoxy-D-xylulose 5-phosphate: step 1/6. Its function is as follows. Catalyzes the NADPH-dependent rearrangement and reduction of 1-deoxy-D-xylulose-5-phosphate (DXP) to 2-C-methyl-D-erythritol 4-phosphate (MEP). The chain is 1-deoxy-D-xylulose 5-phosphate reductoisomerase from Desulfitobacterium hafniense (strain DSM 10664 / DCB-2).